The primary structure comprises 416 residues: Adenylosuccinate synthetase (416 aa).

GTP contacts are provided by residues 13–19 (GDEGKGK) and 41–43 (GHT). The Proton acceptor role is filled by Asp-14. Mg(2+) contacts are provided by Asp-14 and Gly-41. IMP contacts are provided by residues 14-17 (DEGK), 39-42 (NAGH), Thr-126, Arg-140, Gln-220, Thr-235, and Arg-299. The Proton donor role is filled by His-42. 295–301 (VSTGRKR) is a substrate binding site. Residues Arg-301, 327–329 (KLD), and 405–407 (STS) contribute to the GTP site.

The protein belongs to the adenylosuccinate synthetase family. In terms of assembly, homodimer. Mg(2+) is required as a cofactor.

Its subcellular location is the cytoplasm. It carries out the reaction IMP + L-aspartate + GTP = N(6)-(1,2-dicarboxyethyl)-AMP + GDP + phosphate + 2 H(+). Its pathway is purine metabolism; AMP biosynthesis via de novo pathway; AMP from IMP: step 1/2. Functionally, plays an important role in the de novo pathway of purine nucleotide biosynthesis. Catalyzes the first committed step in the biosynthesis of AMP from IMP. The chain is Adenylosuccinate synthetase from Campylobacter jejuni subsp. jejuni serotype O:2 (strain ATCC 700819 / NCTC 11168).